The following is a 137-amino-acid chain: ATP synthase epsilon chain (137 aa).

Belongs to the ATPase epsilon chain family. F-type ATPases have 2 components, CF(1) - the catalytic core - and CF(0) - the membrane proton channel. CF(1) has five subunits: alpha(3), beta(3), gamma(1), delta(1), epsilon(1). CF(0) has three main subunits: a, b and c.

The protein localises to the cell membrane. Produces ATP from ADP in the presence of a proton gradient across the membrane. The polypeptide is ATP synthase epsilon chain (Streptococcus agalactiae serotype Ia (strain ATCC 27591 / A909 / CDC SS700)).